The primary structure comprises 670 residues: Sodium/glucose cotransporter 2 (670 aa).

Topologically, residues 1–20 (MEGHVEEGSELGEQKVLIDN) are extracellular. A helical membrane pass occupies residues 21–42 (PADILVIAAYFLLVIGVGLWSM). At 43 to 61 (FRTNRGTVGGYFLAGRSMV) the chain is on the cytoplasmic side. The helical transmembrane segment at 62-83 (WWPVGASLFASNIGSGHFVGLA) threads the bilayer. Na(+) is bound by residues alanine 71 and isoleucine 74. The Extracellular portion of the chain corresponds to 84–91 (GTGAASGL). Residues 92–112 (AVAGFEWNALFVVLLLGWLFV) form a helical membrane-spanning segment. Over 113–134 (PVYLTAGVITMPQYLRKRFGGR) the chain is Cytoplasmic. The helical transmembrane segment at 135–164 (RIRLYLSVLSLFLYIFTKISVDMFSGAVFI) threads the bilayer. At 165 to 171 (QQALGWN) the chain is on the extracellular side. 2 helical membrane passes run 172-193 (IYAS…GGLA) and 194-215 (ALMY…ILTG). Residues 216 to 273 (YAFHEVGGYSGLFDKYLGAVTSLTVSKDPAVGNISSTCYQPRPDSYHLLRDPVTGGLP) are Extracellular-facing. The N-linked (GlcNAc...) asparagine glycan is linked to asparagine 248. Cystine bridges form between cysteine 253–cysteine 509, cysteine 343–cysteine 349, cysteine 353–cysteine 359, and cysteine 515–cysteine 520. Residues 274 to 293 (WPALLLGLTIVSGWHWCSDQ) traverse the membrane as a helical segment. The Cytoplasmic segment spans residues 294–307 (VIVQRCLAGKNLTH). The chain crosses the membrane as a helical span at residues 308-329 (IKAGCILCGYLKLMPMFLMVMP). Residues 330 to 373 (GMISRILYPDEVACVVPEVCKRVCGTEVGCSNIAYPRLVVKLMP) lie on the Extracellular side of the membrane. The chain crosses the membrane as a helical span at residues 374–404 (NGLRGLMLAVMLAALMSSLASIFNSSSTLFT). Na(+)-binding residues include alanine 387, serine 390, and serine 391. Residues 405-422 (MDIYTRLRPRAGDRELLL) lie on the Cytoplasmic side of the membrane. Residues 423–444 (VGRLWVVFIVAVSVAWLPVVQA) form a helical membrane-spanning segment. Residues 445-449 (AQGGQ) lie on the Extracellular side of the membrane. A helical membrane pass occupies residues 450 to 475 (LFDYIQSVSSYLAPPVSAVFVLALFV). Residues 476 to 480 (PRVNE) are Cytoplasmic-facing. A helical transmembrane segment spans residues 481–503 (KGAFWGLIGGLLMGLARLIPEFF). The Extracellular portion of the chain corresponds to 504-521 (FGTGSCVRPSACPAIFCR). A helical membrane pass occupies residues 522-545 (VHYLYFAIILFFCSGFLTLAISRC). Over 546–649 (TAPIPQKHLH…DISEDPSWAR (104 aa)) the chain is Cytoplasmic. The chain crosses the membrane as a helical span at residues 650-668 (VVNLNALLMMTVAVFLWGF). At 669–670 (YA) the chain is on the extracellular side.

This sequence belongs to the sodium:solute symporter (SSF) (TC 2.A.21) family. In terms of assembly, forms a heterodimer (via TM13) with PDZK1IP1 (via N-terminal transmembrane helix); this interaction enhances SLC5A2 transporter activity. In terms of processing, glycosylated at a single site. In terms of tissue distribution, kidney, in proximal tubule S1 segments.

Its subcellular location is the apical cell membrane. It carries out the reaction D-glucose(out) + Na(+)(out) = D-glucose(in) + Na(+)(in). Enhanced by the interaction with PDZK1IP1/MAP17. Functionally, electrogenic Na(+)-coupled sugar symporter that actively transports D-glucose at the plasma membrane, with a Na(+) to sugar coupling ratio of 1:1. Transporter activity is driven by a transmembrane Na(+) electrochemical gradient set by the Na(+)/K(+) pump. Unlike SLC5A1/SGLT1, requires the auxiliary protein PDZK1IP1/MAP17 for full transporter activity. Has a primary role in D-glucose reabsorption from glomerular filtrate across the brush border of the early proximal tubules of the kidney. The polypeptide is Sodium/glucose cotransporter 2 (Slc5a2) (Rattus norvegicus (Rat)).